Reading from the N-terminus, the 485-residue chain is Glutamyl-tRNA(Gln) amidotransferase subunit A (485 aa).

Active-site charge relay system residues include lysine 76 and serine 151. The Acyl-ester intermediate role is filled by serine 175.

This sequence belongs to the amidase family. GatA subfamily. As to quaternary structure, heterotrimer of A, B and C subunits.

The enzyme catalyses L-glutamyl-tRNA(Gln) + L-glutamine + ATP + H2O = L-glutaminyl-tRNA(Gln) + L-glutamate + ADP + phosphate + H(+). Its function is as follows. Allows the formation of correctly charged Gln-tRNA(Gln) through the transamidation of misacylated Glu-tRNA(Gln) in organisms which lack glutaminyl-tRNA synthetase. The reaction takes place in the presence of glutamine and ATP through an activated gamma-phospho-Glu-tRNA(Gln). This chain is Glutamyl-tRNA(Gln) amidotransferase subunit A, found in Thiobacillus denitrificans (strain ATCC 25259 / T1).